The sequence spans 247 residues: MSEKIAILSAYSFVNIEEPANLIPKLLLIGKRKYVRGTILLANEGFNGSFSGSYENVNLVLEELIKLTGPKDVNVKINYSDVHPFQKLKVRLKKEIVAMNVEGLNVDLFKGEYIEPKDWDEFITKQNVIVIDTRNDYEVEVGTFKSAISPNTKTFKQFPAWVQKNQGLLKGKRIAMVCTGGIRCEKSTSLLKSIGYDEVYHLKGGILQYLEDTQNKNNLWQGACFVFDDRRAVADDLSPVAGHWLQR.

The Rhodanese domain maps to 124-218; it reads TKQNVIVIDT…YLEDTQNKNN (95 aa). Cysteine 178 (cysteine persulfide intermediate) is an active-site residue.

It belongs to the TrhO family.

The catalysed reaction is uridine(34) in tRNA + AH2 + O2 = 5-hydroxyuridine(34) in tRNA + A + H2O. Its function is as follows. Catalyzes oxygen-dependent 5-hydroxyuridine (ho5U) modification at position 34 in tRNAs. The polypeptide is tRNA uridine(34) hydroxylase (Rickettsia akari (strain Hartford)).